Here is a 93-residue protein sequence, read N- to C-terminus: Parbolysin P4 (93 aa).

3 cysteine pairs are disulfide-bonded: Cys-16-Cys-37, Cys-22-Cys-33, and Cys-47-Cys-60.

It belongs to the worm cytolysin family. Localized within the skin and proboscis and are most readily isolated from body mucus secretions.

Its subcellular location is the secreted. Functionally, cytolysin that shows hemolytic activity (on bovine erythrocytes, HC(50)=5.75 mg/ml). This hemolytic activity is completely inhibited by small unilamelar vesicles composed of PC/PG, PC/PI and PC/PS in 1:1 molar ratios (with at least 100 mg/ml concentration). This Parborlasia corrugatus (Antarctic nemertean worm) protein is Parbolysin P4.